Reading from the N-terminus, the 85-residue chain is Putative membrane protein insertion efficiency factor (85 aa).

This sequence belongs to the UPF0161 family.

The protein localises to the cell inner membrane. In terms of biological role, could be involved in insertion of integral membrane proteins into the membrane. The protein is Putative membrane protein insertion efficiency factor of Sodalis glossinidius (strain morsitans).